The primary structure comprises 88 residues: uncharacterized protein (88 aa).

A run of 2 helical transmembrane segments spans residues leucine 27–histidine 46 and serine 61–isoleucine 83.

It is found in the membrane. This is an uncharacterized protein from Saccharomyces cerevisiae (strain ATCC 204508 / S288c) (Baker's yeast).